Consider the following 325-residue polypeptide: MRRYARITGTGSYLPPRRLTNHDLAAELAQRGIETSDEWIVERTGIHARHFAAPDVASSDLALEASKKALEAAGCQPQDIDLIIVATSTPDMVFPSTACILQNKLGANGCAAFDVQAVCSGFVYALTVADAMIQSGAASRALVVGSEVFSRILDFNDRTTCVLFGDGAGAVVLEASEQPGILASDLHADGKHVGILCVPGNVSGGQVLGDPLLKMDGQAVFKLAVGVLEKAARATLDKAGLTDADIDWLIPHQANIRIMQSTARKLKLSMDKVVVTVDQHGNTSAASIPLALDHGVRNGQVKPGQTVLLEGVGGGFTWGAVLLKM.

Residues cysteine 119 and histidine 252 contribute to the active site. Positions 253–257 (QANIR) are ACP-binding. Residue asparagine 282 is part of the active site.

This sequence belongs to the thiolase-like superfamily. FabH family. As to quaternary structure, homodimer.

The protein localises to the cytoplasm. It carries out the reaction malonyl-[ACP] + acetyl-CoA + H(+) = 3-oxobutanoyl-[ACP] + CO2 + CoA. It participates in lipid metabolism; fatty acid biosynthesis. In terms of biological role, catalyzes the condensation reaction of fatty acid synthesis by the addition to an acyl acceptor of two carbons from malonyl-ACP. Catalyzes the first condensation reaction which initiates fatty acid synthesis and may therefore play a role in governing the total rate of fatty acid production. Possesses both acetoacetyl-ACP synthase and acetyl transacylase activities. Its substrate specificity determines the biosynthesis of branched-chain and/or straight-chain of fatty acids. The chain is Beta-ketoacyl-[acyl-carrier-protein] synthase III from Delftia acidovorans (strain DSM 14801 / SPH-1).